Consider the following 559-residue polypeptide: 3-phosphoinositide-dependent protein kinase 1 (559 aa).

Position 9 is a phosphotyrosine; by SRC and INSR (Tyr9). Ser25 is modified (phosphoserine). The disordered stretch occupies residues 25-83; that stretch reads SPSMVRSQTEPSSSPGIPSGVSRQGSTMDGTTAEARPSTNPLQQHPAQLPPQPRKKRPE. The segment covering 35 to 46 has biased composition (low complexity); that stretch reads PSSSPGIPSGVS. In terms of domain architecture, Protein kinase spans 85–345; the sequence is FKFGKILGEG…YGPLKAHPFF (261 aa). ATP-binding positions include 95 to 97 and Lys114; that span reads SFS. The interval 116–160 is PIF-pocket; the sequence is LEKRHIIKENKVPYVTRERDVMSRLDHPFFVKLYFTFQDDEKLYF. ATP contacts are provided by residues 163-165 and Glu169; that span reads SYA. The active-site Proton acceptor is the Asp208. Glu212 and Asp226 together coordinate ATP. The residue at position 244 (Ser244) is a Phosphoserine. The residue at position 307 (Lys307) is an N6-acetyllysine. A Phosphothreonine; by MELK modification is found at Thr357. Residues Tyr376 and Tyr379 each carry the phosphotyrosine; by SRC and INSR modification. Ser396 is subject to Phosphoserine. Position 397 is a phosphoserine; by MAP3K5 (Ser397). Position 399 is a phosphoserine (Ser399). At Ser401 the chain carries Phosphoserine; by MAP3K5. Ser413 bears the Phosphoserine mark. The PH domain occupies 462–553; the sequence is KMGPVDKRKG…EVWRQQYQSS (92 aa). Ser504 is subject to Phosphoserine; by PKC/PRKCQ. Thr516 carries the post-translational modification Phosphothreonine; by autocatalysis. The residue at position 532 (Ser532) is a Phosphoserine; by PKC/PRKCQ.

The protein belongs to the protein kinase superfamily. AGC Ser/Thr protein kinase family. PDPK1 subfamily. Homodimer in its autoinhibited state. Active as monomer. Interacts with NPRL2, PPARG, PAK1, PTK2B, GRB14, PKN1 (via C-terminus), STRAP and IKKB. The Tyr-9 phosphorylated form interacts with SRC, RASA1 and CRK (via their SH2 domains). Interacts with SGK3 in a phosphorylation-dependent manner. The tyrosine-phosphorylated form interacts with PTPN6. The Ser-244 phosphorylated form interacts with YWHAH and YWHAQ. Binds INSR in response to insulin. Interacts (via PH domain) with SMAD3, SMAD4 and SMAD7. Interacts with PKN2; the interaction stimulates PDPK1 autophosphorylation, its PI(3,4,5)P3-dependent kinase activity toward 'Ser-473' of AKT1 but also activates its kinase activity toward PRKCD and PRKCZ. In terms of processing, phosphorylation on Ser-244 in the activation loop is required for full activity. PDPK1 itself can autophosphorylate Ser-244, leading to its own activation. Autophosphorylation is inhibited by the apoptotic C-terminus cleavage product of PKN2. Tyr-9 phosphorylation is critical for stabilization of both PDPK1 and the PDPK1/SRC complex via HSP90-mediated protection of PDPK1 degradation. Angiotensin II stimulates the tyrosine phosphorylation of PDPK1 in vascular smooth muscle in a calcium- and SRC-dependent manner. Phosphorylated on Tyr-9, Tyr-376 and Tyr-379 by INSR in response to insulin. Palmitate negatively regulates autophosphorylation at Ser-244 and palmitate-induced phosphorylation at Ser-532 and Ser-504 by PKC/PRKCQ negatively regulates its ability to phosphorylate PKB/AKT1. Phosphorylation at Thr-357 by MELK partially inhibits kinase activity, the inhibition is cooperatively enhanced by phosphorylation at Ser-397 and Ser-401 by MAP3K5. Monoubiquitinated in the kinase domain, deubiquitinated by USP4.

It localises to the cytoplasm. The protein localises to the nucleus. It is found in the cell membrane. The protein resides in the cell junction. Its subcellular location is the focal adhesion. It catalyses the reaction L-seryl-[protein] + ATP = O-phospho-L-seryl-[protein] + ADP + H(+). The enzyme catalyses L-threonyl-[protein] + ATP = O-phospho-L-threonyl-[protein] + ADP + H(+). Its activity is regulated as follows. Homodimerization regulates its activity by maintaining the kinase in an autoinhibitory conformation. NPRL2 down-regulates its activity by interfering with tyrosine phosphorylation at the Tyr-9, Tyr-376 and Tyr-379 residues. The 14-3-3 protein YWHAQ acts as a negative regulator by association with the residues surrounding the Ser-244 residue. STRAP positively regulates its activity by enhancing its autophosphorylation and by stimulating its dissociation from YWHAQ. SMAD2, SMAD3, SMAD4 and SMAD7 also positively regulate its activity by stimulating its dissociation from YWHAQ. Activated by phosphorylation on Tyr-9, Tyr-376 and Tyr-379 by INSR in response to insulin. Its function is as follows. Serine/threonine kinase which acts as a master kinase, phosphorylating and activating a subgroup of the AGC family of protein kinases. Its targets include: protein kinase B (PKB/AKT1, PKB/AKT2, PKB/AKT3), p70 ribosomal protein S6 kinase (RPS6KB1), p90 ribosomal protein S6 kinase (RPS6KA1, RPS6KA2 and RPS6KA3), cyclic AMP-dependent protein kinase (PRKACA), protein kinase C (PRKCD and PRKCZ), serum and glucocorticoid-inducible kinase (SGK1, SGK2 and SGK3), p21-activated kinase-1 (PAK1), TSSK3, protein kinase PKN (PKN1 and PKN2). Plays a central role in the transduction of signals from insulin by providing the activating phosphorylation to PKB/AKT1, thus propagating the signal to downstream targets controlling cell proliferation and survival, as well as glucose and amino acid uptake and storage. Negatively regulates the TGF-beta-induced signaling by: modulating the association of SMAD3 and SMAD7 with TGF-beta receptor, phosphorylating SMAD2, SMAD3, SMAD4 and SMAD7, preventing the nuclear translocation of SMAD3 and SMAD4 and the translocation of SMAD7 from the nucleus to the cytoplasm in response to TGF-beta. Activates PPARG transcriptional activity and promotes adipocyte differentiation. Activates the NF-kappa-B pathway via phosphorylation of IKKB. The tyrosine phosphorylated form is crucial for the regulation of focal adhesions by angiotensin II. Controls proliferation, survival, and growth of developing pancreatic cells. Participates in the regulation of Ca(2+) entry and Ca(2+)-activated K(+) channels of mast cells. Essential for the motility of vascular endothelial cells (ECs) and is involved in the regulation of their chemotaxis. Plays a critical role in cardiac homeostasis by serving as a dual effector for cell survival and beta-adrenergic response. Plays an important role during thymocyte development by regulating the expression of key nutrient receptors on the surface of pre-T cells and mediating Notch-induced cell growth and proliferative responses. Provides negative feedback inhibition to toll-like receptor-mediated NF-kappa-B activation in macrophages. The polypeptide is 3-phosphoinositide-dependent protein kinase 1 (Pdpk1) (Rattus norvegicus (Rat)).